The sequence spans 364 residues: Putative methylthioribose-1-phosphate isomerase (364 aa).

Substrate-binding positions include 57-59 (RGA), Arg-100, and Gln-206. Asp-247 (proton donor) is an active-site residue. A substrate-binding site is contributed by 257 to 258 (NK).

It belongs to the eIF-2B alpha/beta/delta subunits family. MtnA subfamily.

It catalyses the reaction 5-(methylsulfanyl)-alpha-D-ribose 1-phosphate = 5-(methylsulfanyl)-D-ribulose 1-phosphate. Catalyzes the interconversion of methylthioribose-1-phosphate (MTR-1-P) into methylthioribulose-1-phosphate (MTRu-1-P). The sequence is that of Putative methylthioribose-1-phosphate isomerase from Pyrococcus horikoshii (strain ATCC 700860 / DSM 12428 / JCM 9974 / NBRC 100139 / OT-3).